The primary structure comprises 883 residues: Lysine-specific demethylase JMJ29 (883 aa).

Disordered stretches follow at residues 30 to 62 and 161 to 204; these read KPFM…SAVK and RTHS…SRKQ. Positions 34-43 are enriched in low complexity; the sequence is SKGSSPSSSS. Composition is skewed to polar residues over residues 161 to 172 and 184 to 204; these read RTHSLSANSPEN and SPAS…SRKQ. Positions 209, 212, 223, 226, 232, 235, 252, 255, 338, 341, 363, and 381 each coordinate Zn(2+). An RING-type; degenerate zinc finger spans residues 209–256; that stretch reads CHQCLKGERITLLICSECEKTMFCLQCIRKWYPNLSEDDVVEKCPLCR. The B box-type; atypical zinc finger occupies 333–392; that stretch reads DERVYCDHCATSIVDLHRSCPKCSYELCLKCCQEIREGSLSERPEMKFHYVDRGHRYMHG. Residues 632–863 enclose the JmjC domain; it reads PRTGILNIAT…ECLRLTEEFR (232 aa). Residues histidine 676 and aspartate 678 each contribute to the Fe cation site. Positions 713-743 are disordered; sequence NKVDKQSTEDCNEKEEEEEEELNMPEISSNE. The span at 722-735 shows a compositional bias: acidic residues; the sequence is DCNEKEEEEEEELN. A Nuclear localization signal motif is present at residues 755 to 762; that stretch reads FRREDVPK. Fe cation is bound at residue histidine 831.

The protein belongs to the JARID1 histone demethylase family. Requires Fe(2+) as cofactor. As to expression, expressed in inflorescences, roots, siliques, leaves and stems.

Its subcellular location is the nucleus. In terms of biological role, may function as histone H3 lysine demethylase and be involved in regulation of gene expression. This is Lysine-specific demethylase JMJ29 from Arabidopsis thaliana (Mouse-ear cress).